The chain runs to 193 residues: Holliday junction branch migration complex subunit RuvA (193 aa).

Residues 1–64 (MIGRIAGVLL…EDAHLLYGFG (64 aa)) are domain I. Residues 65-139 (TAEERSTFRE…GKIGADLGAM (75 aa)) are domain II. The interval 139 to 143 (MAGAA) is flexible linker. A domain III region spans residues 144 to 193 (SASDHASDILNALLALGYSEKEALTAVKNVPAGTGVSEGIKLALKALSKG).

The protein belongs to the RuvA family. In terms of assembly, homotetramer. Forms an RuvA(8)-RuvB(12)-Holliday junction (HJ) complex. HJ DNA is sandwiched between 2 RuvA tetramers; dsDNA enters through RuvA and exits via RuvB. An RuvB hexamer assembles on each DNA strand where it exits the tetramer. Each RuvB hexamer is contacted by two RuvA subunits (via domain III) on 2 adjacent RuvB subunits; this complex drives branch migration. In the full resolvosome a probable DNA-RuvA(4)-RuvB(12)-RuvC(2) complex forms which resolves the HJ.

Its subcellular location is the cytoplasm. The RuvA-RuvB-RuvC complex processes Holliday junction (HJ) DNA during genetic recombination and DNA repair, while the RuvA-RuvB complex plays an important role in the rescue of blocked DNA replication forks via replication fork reversal (RFR). RuvA specifically binds to HJ cruciform DNA, conferring on it an open structure. The RuvB hexamer acts as an ATP-dependent pump, pulling dsDNA into and through the RuvAB complex. HJ branch migration allows RuvC to scan DNA until it finds its consensus sequence, where it cleaves and resolves the cruciform DNA. In Paraburkholderia phytofirmans (strain DSM 17436 / LMG 22146 / PsJN) (Burkholderia phytofirmans), this protein is Holliday junction branch migration complex subunit RuvA.